The sequence spans 264 residues: Thiazole synthase (264 aa).

Lysine 106 functions as the Schiff-base intermediate with DXP in the catalytic mechanism. Residues glycine 167, 193 to 194 (AG), and 215 to 216 (NT) contribute to the 1-deoxy-D-xylulose 5-phosphate site.

Belongs to the ThiG family. Homotetramer. Forms heterodimers with either ThiH or ThiS.

The protein resides in the cytoplasm. The catalysed reaction is [ThiS sulfur-carrier protein]-C-terminal-Gly-aminoethanethioate + 2-iminoacetate + 1-deoxy-D-xylulose 5-phosphate = [ThiS sulfur-carrier protein]-C-terminal Gly-Gly + 2-[(2R,5Z)-2-carboxy-4-methylthiazol-5(2H)-ylidene]ethyl phosphate + 2 H2O + H(+). It participates in cofactor biosynthesis; thiamine diphosphate biosynthesis. Catalyzes the rearrangement of 1-deoxy-D-xylulose 5-phosphate (DXP) to produce the thiazole phosphate moiety of thiamine. Sulfur is provided by the thiocarboxylate moiety of the carrier protein ThiS. In vitro, sulfur can be provided by H(2)S. The polypeptide is Thiazole synthase (Xanthomonas campestris pv. campestris (strain 8004)).